The primary structure comprises 353 residues: Chorismate synthase (353 aa).

An NADP(+)-binding site is contributed by Arg48. FMN-binding positions include 128 to 130 (RAS), Gly280, 295 to 299 (KPIPS), and Arg321.

Belongs to the chorismate synthase family. In terms of assembly, homotetramer. FMNH2 is required as a cofactor.

The enzyme catalyses 5-O-(1-carboxyvinyl)-3-phosphoshikimate = chorismate + phosphate. The protein operates within metabolic intermediate biosynthesis; chorismate biosynthesis; chorismate from D-erythrose 4-phosphate and phosphoenolpyruvate: step 7/7. Catalyzes the anti-1,4-elimination of the C-3 phosphate and the C-6 proR hydrogen from 5-enolpyruvylshikimate-3-phosphate (EPSP) to yield chorismate, which is the branch point compound that serves as the starting substrate for the three terminal pathways of aromatic amino acid biosynthesis. This reaction introduces a second double bond into the aromatic ring system. This Nitratidesulfovibrio vulgaris (strain DSM 19637 / Miyazaki F) (Desulfovibrio vulgaris) protein is Chorismate synthase.